A 98-amino-acid chain; its full sequence is NADH-ubiquinone oxidoreductase chain 4L (98 aa).

Transmembrane regions (helical) follow at residues Met-1–Met-21, Ala-29–Leu-49, and Ile-61–Ile-81.

The protein belongs to the complex I subunit 4L family. Core subunit of respiratory chain NADH dehydrogenase (Complex I) which is composed of 45 different subunits.

Its subcellular location is the mitochondrion inner membrane. The catalysed reaction is a ubiquinone + NADH + 5 H(+)(in) = a ubiquinol + NAD(+) + 4 H(+)(out). In terms of biological role, core subunit of the mitochondrial membrane respiratory chain NADH dehydrogenase (Complex I) which catalyzes electron transfer from NADH through the respiratory chain, using ubiquinone as an electron acceptor. Part of the enzyme membrane arm which is embedded in the lipid bilayer and involved in proton translocation. The protein is NADH-ubiquinone oxidoreductase chain 4L (MT-ND4L) of Eubalaena australis (Southern right whale).